A 546-amino-acid polypeptide reads, in one-letter code: CTP synthase (546 aa).

The amidoligase domain stretch occupies residues 1–265; that stretch reads MTKYVFVTGG…DEIVCHKLNI (265 aa). Ser-13 is a binding site for CTP. A UTP-binding site is contributed by Ser-13. Residues 14 to 19 and Asp-71 each bind ATP; that span reads SLGKGI. Mg(2+) is bound by residues Asp-71 and Glu-139. CTP contacts are provided by residues 146–148, 186–191, and Lys-222; these read DIE and KTKPTQ. Residues 186 to 191 and Lys-222 each bind UTP; that span reads KTKPTQ. The Glutamine amidotransferase type-1 domain occupies 290–543; the sequence is NIAFVGKYVD…VRAALAHQQK (254 aa). Gly-351 contributes to the L-glutamine binding site. Cys-378 serves as the catalytic Nucleophile; for glutamine hydrolysis. Residues 379 to 382, Glu-402, and Arg-469 contribute to the L-glutamine site; that span reads LGMQ. Catalysis depends on residues His-516 and Glu-518.

The protein belongs to the CTP synthase family. Homotetramer.

The enzyme catalyses UTP + L-glutamine + ATP + H2O = CTP + L-glutamate + ADP + phosphate + 2 H(+). It catalyses the reaction L-glutamine + H2O = L-glutamate + NH4(+). The catalysed reaction is UTP + NH4(+) + ATP = CTP + ADP + phosphate + 2 H(+). It participates in pyrimidine metabolism; CTP biosynthesis via de novo pathway; CTP from UDP: step 2/2. Its activity is regulated as follows. Allosterically activated by GTP, when glutamine is the substrate; GTP has no effect on the reaction when ammonia is the substrate. The allosteric effector GTP functions by stabilizing the protein conformation that binds the tetrahedral intermediate(s) formed during glutamine hydrolysis. Inhibited by the product CTP, via allosteric rather than competitive inhibition. Functionally, catalyzes the ATP-dependent amination of UTP to CTP with either L-glutamine or ammonia as the source of nitrogen. Regulates intracellular CTP levels through interactions with the four ribonucleotide triphosphates. In Thiobacillus denitrificans (strain ATCC 25259 / T1), this protein is CTP synthase.